A 781-amino-acid polypeptide reads, in one-letter code: ATP-dependent 6-phosphofructokinase (781 aa).

Residues 1–394 (MATWMEGKYV…NLATYIKLSK (394 aa)) are N-terminal catalytic PFK domain 1. Residues glycine 27, 90–91 (RC), and 120–123 (GDGS) contribute to the ATP site. Mg(2+) is bound at residue aspartate 121. Substrate-binding positions include 166–168 (SID), arginine 203, 210–212 (MGR), glutamate 266, arginine 294, and 300–303 (HVQR). Aspartate 168 serves as the catalytic Proton acceptor. An interdomain linker region spans residues 395-409 (IEQPRQSVMSSENNL). Residues 410-781 (RIGIVNVGAP…ESIMAGTDRK (372 aa)) form a C-terminal regulatory PFK domain 2 region. Beta-D-fructose 2,6-bisphosphate-binding positions include arginine 479, 537-541 (TISNN), arginine 575, 582-584 (MGG), aspartate 638, arginine 664, 670-673 (HMQQ), and arginine 745.

Belongs to the phosphofructokinase type A (PFKA) family. ATP-dependent PFK group I subfamily. Eukaryotic two domain clade 'E' sub-subfamily. Homotetramer. Requires Mg(2+) as cofactor.

It is found in the cytoplasm. It carries out the reaction beta-D-fructose 6-phosphate + ATP = beta-D-fructose 1,6-bisphosphate + ADP + H(+). Its pathway is carbohydrate degradation; glycolysis; D-glyceraldehyde 3-phosphate and glycerone phosphate from D-glucose: step 3/4. Its activity is regulated as follows. Allosterically activated by ADP, AMP, or fructose 2,6-bisphosphate, and allosterically inhibited by ATP or citrate. In terms of biological role, catalyzes the phosphorylation of D-fructose 6-phosphate to fructose 1,6-bisphosphate by ATP, the first committing step of glycolysis. The sequence is that of ATP-dependent 6-phosphofructokinase (PFK) from Schistosoma mansoni (Blood fluke).